The primary structure comprises 150 residues: C-C motif chemokine 25 (150 aa).

Positions 1-23 (MNLWLLACLVAGFLGAWAPAVHT) are cleaved as a signal peptide. 2 disulfide bridges follow: Cys30–Cys58 and Cys31–Cys75.

The protein belongs to the intercrine beta (chemokine CC) family. Specifically expressed by thymic dendritic cells. High levels in thymus and small intestine.

It is found in the secreted. Potentially involved in T-cell development. Recombinant protein shows chemotactic activity on thymocytes, macrophages, THP-1 cells, and dendritics cells but is inactive on peripheral blood lymphocytes and neutrophils. Binds to CCR9. Isoform 2 is an antagonist of isoform 1. Binds to atypical chemokine receptor ACKR4 and mediates the recruitment of beta-arrestin (ARRB1/2) to ACKR4. This chain is C-C motif chemokine 25 (CCL25), found in Homo sapiens (Human).